The sequence spans 359 residues: Cytoplasmic tRNA 2-thiolation protein 2 (359 aa).

This sequence belongs to the CTU2/NCS2 family.

The protein resides in the cytoplasm. It participates in tRNA modification; 5-methoxycarbonylmethyl-2-thiouridine-tRNA biosynthesis. In terms of biological role, plays a central role in 2-thiolation of mcm(5)S(2)U at tRNA wobble positions of tRNA(Lys), tRNA(Glu) and tRNA(Gln). May act by forming a heterodimer with NCS6 that ligates sulfur from thiocarboxylated URM1 onto the uridine of tRNAs at wobble position. Prior mcm(5) tRNA modification by the elongator complex is required for 2-thiolation. May also be involved in protein urmylation. In Ajellomyces capsulatus (strain NAm1 / WU24) (Darling's disease fungus), this protein is Cytoplasmic tRNA 2-thiolation protein 2.